Here is a 213-residue protein sequence, read N- to C-terminus: MSSKHRAVVKDKWKMKKWYEVVAPTSFGGITLGSTPADDPEKLIGRVIETTLYDITGDITQVHVKLYFQIISIDGNKALTRFKGHELARDYMRSLVRRKSSKIQGIFDINTKDGYVLRVTIVALTSYRCNTSQKKAIRRVMREYIFKKASELTLDELVQEIMSYKISNEIAELARKIYPIRRVEVYKTKLLLIPSPEGPKPAVVISPLQAREE.

The protein belongs to the eukaryotic ribosomal protein eS1 family.

The protein is Small ribosomal subunit protein eS1 of Desulfurococcus amylolyticus (strain DSM 18924 / JCM 16383 / VKM B-2413 / 1221n) (Desulfurococcus kamchatkensis).